Here is a 286-residue protein sequence, read N- to C-terminus: Shikimate dehydrogenase (NADP(+)) (286 aa).

Shikimate is bound by residues 22–24 and threonine 69; that span reads SLS. Lysine 73 functions as the Proton acceptor in the catalytic mechanism. Glutamate 85 is a binding site for NADP(+). Asparagine 94 and aspartate 109 together coordinate shikimate. NADP(+) contacts are provided by residues 133-137 and valine 231; that span reads GAGGA. Tyrosine 233 is a binding site for shikimate. Glycine 254 contacts NADP(+).

It belongs to the shikimate dehydrogenase family. As to quaternary structure, homodimer.

It catalyses the reaction shikimate + NADP(+) = 3-dehydroshikimate + NADPH + H(+). It functions in the pathway metabolic intermediate biosynthesis; chorismate biosynthesis; chorismate from D-erythrose 4-phosphate and phosphoenolpyruvate: step 4/7. In terms of biological role, involved in the biosynthesis of the chorismate, which leads to the biosynthesis of aromatic amino acids. Catalyzes the reversible NADPH linked reduction of 3-dehydroshikimate (DHSA) to yield shikimate (SA). In Alkaliphilus metalliredigens (strain QYMF), this protein is Shikimate dehydrogenase (NADP(+)).